The sequence spans 459 residues: Ribulose bisphosphate carboxylase (459 aa).

Asn111 serves as a coordination point for substrate. Residue Lys166 is the Proton acceptor of the active site. Lys168 serves as a coordination point for substrate. 3 residues coordinate Mg(2+): Lys191, Asp193, and Glu194. N6-carboxylysine is present on Lys191. The active-site Proton acceptor is the His287. Residues Arg288, His321, and Ser368 each coordinate substrate.

This sequence belongs to the RuBisCO large chain family. Type II subfamily. In terms of assembly, homodimer. The cofactor is Mg(2+).

It is found in the cytoplasm. It carries out the reaction 2 (2R)-3-phosphoglycerate + 2 H(+) = D-ribulose 1,5-bisphosphate + CO2 + H2O. It catalyses the reaction D-ribulose 1,5-bisphosphate + O2 = 2-phosphoglycolate + (2R)-3-phosphoglycerate + 2 H(+). In terms of biological role, ruBisCO catalyzes two reactions: the carboxylation of D-ribulose 1,5-bisphosphate, the primary event in carbon dioxide fixation, as well as the oxidative fragmentation of the pentose substrate. Both reactions occur simultaneously and in competition at the same active site. This is Ribulose bisphosphate carboxylase from Halothiobacillus neapolitanus (strain ATCC 23641 / c2) (Thiobacillus neapolitanus).